The sequence spans 603 residues: Myotubularin (603 aa).

Phosphoserine occurs at positions 13 and 18. Residues 29-97 form the GRAM domain; sequence QDVSETVPRL…GVISRIEKMG (69 aa). Residues 163–538 enclose the Myotubularin phosphatase domain; the sequence is GWTVYNPVEE…RHLELWVNYY (376 aa). Asparagine 288, asparagine 313, and isoleucine 314 together coordinate a 1,2-diacyl-sn-glycero-3-phospho-(1D-myo-inositol-3,5-bisphosphate). 3 residues coordinate a 1,2-diacyl-sn-glycero-3-phospho-(1D-myo-inositol-3-phosphate): asparagine 288, asparagine 313, and isoleucine 314. Cysteine 375 serves as the catalytic Phosphocysteine intermediate. Residues serine 376, aspartate 377, glycine 378, tryptophan 379, aspartate 380, arginine 381, lysine 417, and arginine 421 each contribute to the a 1,2-diacyl-sn-glycero-3-phospho-(1D-myo-inositol-3,5-bisphosphate) site. A 1,2-diacyl-sn-glycero-3-phospho-(1D-myo-inositol-3-phosphate)-binding residues include serine 376, aspartate 377, glycine 378, tryptophan 379, aspartate 380, and arginine 381. Arginine 421 contributes to the a 1,2-diacyl-sn-glycero-3-phospho-(1D-myo-inositol-3-phosphate) binding site. Threonine 495 bears the Phosphothreonine mark. Serine 588 carries the post-translational modification Phosphoserine.

Belongs to the protein-tyrosine phosphatase family. Non-receptor class myotubularin subfamily. In terms of assembly, heterodimer with MTMR12. Interacts with KMT2A/MLL1 (via SET domain). Interacts with DES in skeletal muscle but not in cardiac muscle. Interacts with SPEG. In terms of tissue distribution, widely expressed with highest levels detected in heart and muscle and low levels in brain (at protein level). Expressed in skeletal muscles (at protein level).

It localises to the cytoplasm. The protein localises to the cell membrane. It is found in the cell projection. The protein resides in the filopodium. Its subcellular location is the ruffle. It localises to the late endosome. The protein localises to the myofibril. It is found in the sarcomere. It catalyses the reaction a 1,2-diacyl-sn-glycero-3-phospho-(1D-myo-inositol-3-phosphate) + H2O = a 1,2-diacyl-sn-glycero-3-phospho-(1D-myo-inositol) + phosphate. The enzyme catalyses a 1,2-diacyl-sn-glycero-3-phospho-(1D-myo-inositol-3,5-bisphosphate) + H2O = a 1,2-diacyl-sn-glycero-3-phospho-(1D-myo-inositol-5-phosphate) + phosphate. It carries out the reaction 1,2-dioctanoyl-sn-glycero-3-phospho-(1-D-myo-inositol-3-phosphate) + H2O = 1,2-dioctanoyl-sn-glycero-3-phospho-(1D-myo-inositol) + phosphate. The catalysed reaction is 1,2-dioctanoyl-sn-glycero-3-phospho-(1D-myo-inositol-3,5-bisphosphate) + H2O = 1,2-dioctanoyl-sn-glycero-3-phospho-(1D-myo-inositol-5-phosphate) + phosphate. It catalyses the reaction 1,2-dihexadecanoyl-sn-glycero-3-phospho-(1D-myo-inositol-3,5-phosphate) + H2O = 1,2-dihexadecanoyl-sn-glycero-3-phospho-(1D-myo-inositol-5-phosphate) + phosphate. Allosterically activated by phosphatidylinositol 5-phosphate (PI5P). Lipid phosphatase which dephosphorylates phosphatidylinositol 3-monophosphate (PI3P) and phosphatidylinositol 3,5-bisphosphate (PI(3,5)P2). Has also been shown to dephosphorylate phosphotyrosine- and phosphoserine-containing peptides. Negatively regulates EGFR degradation through regulation of EGFR trafficking from the late endosome to the lysosome. Plays a role in vacuolar formation and morphology. Regulates desmin intermediate filament assembly and architecture. Plays a role in mitochondrial morphology and positioning. Required for skeletal muscle maintenance but not for myogenesis. In skeletal muscles, stabilizes MTMR12 protein levels. The polypeptide is Myotubularin (Mus musculus (Mouse)).